The sequence spans 169 residues: Group 2 truncated hemoglobin 3-2 (169 aa).

H99 contributes to the heme b binding site.

The protein belongs to the truncated hemoglobin family. Group II subfamily. As to quaternary structure, homodimer when ferric.

Its function is as follows. Hemoglobin-like protein that exhibits an unusual concentration-independent binding of O(2) and CO. Required for general plant development and during nodulation. May promote shoot organogenesis from root explants. This chain is Group 2 truncated hemoglobin 3-2, found in Medicago truncatula (Barrel medic).